The sequence spans 3890 residues: MNYRDKIQKFSIRKYTVGTFSTVIATLVFLGFNTSQAHAAETNQPASVVKQKQQSNNEQTENRESQVQNSQNSQNSQSLSATHENEQPNNSQANLVNQKVAQSSTTNDEQPASQNVNTKKDSATAATTQPDKEESKHKQNESQSANKNGNDNRAAHVENHEANVVTASDSSDNGNVQHDRNELQAFFDANYHDYRFIDRENADSGTFNYVKGIFDKINTLLGSNDPINNKDLQLAYKELEQAVALIRTMPQRQQTSRRSNRIQTRSVESRAAEPRSVSDYQNANSSYYVENANDGSGYPVGTYINASSKGAPYNLPTTPWNTLKASDSKEIALMTAKQTGDGYQWVIKFNKGHAPHQNMIFWFALPADQVPVGRTDFVTVNSDGTNVQWSHGAGAGANKPLQQMWEYGVNDPDRSHDFKIRNRSGQVIYSWPTVHVYSLEDLSRASDYFSEAGATPATKAFGRQNFEYINGQKPAESPGVPKVYTFIGQGDASYTISFKTQGPTVNKLYYAAGGRALEYNQLFMYSQLYVESTQDHQQRLNGLRQVVNRTYRIGTTKRVEVSQGNVQTKKVLESTNLNIDDFVDDPLSYVKTPSNKVLGFYPTNANTNAFRPGGVQELNEYQLSQLFTDQKLQEAARTRNPIRLMIGFDYPDGYGNSETLVPVNLTVLPEIQHNIKFFKNDDTQNIAEKPFSKQAGHPVFYVYAGNQGNASVNLGGSVTSIQPLRINLTSNENFTDKDWQITGIPRTLHIENSTNRTNNARERNIELVGNLLPGDYFGTIRFGRKEQLFEIRVKPHTPTITTTAEQLRGTALQKVPVNISGIPLDPSALVYLVAPTNQTTNGGSEADQIPSGYTILATGTPDGVHNTITIRPQDYVVFIPPVGKQIRAVVYYNKVVASNMSNAVTILPDDIPPTINNPVGINAKYYRGDEVNFTMGVSDRHSGIKNTTITTLPSGWTSNLTKSDNKNGSLAITGRVSMNQAFNSDITFKVSATDNVNNTTNDSQSKHVSIHVGKISEDAHPIVLGNTEKVVVVNPTAVSNDEKQSIITAFMNKNQNIRGYLASTDPVTVDNNGNVTLHYRDGSSTTLDATNVMTYEPVVKSEYQTANAAKTATVTIAKGQSFNIGDIKQYFTLSNGQAIPNGTFTNITSDRTIPTAQEVSQMNAGTQLYHIVASNAYHKDTEDFYISLKIVDVKQPEGDQRVYRTSTYDLTTDEISKVKQAFINANRDVITLAEGDISVTNTPNGANVSTITVNINKGRLTKSFASNLANMNFLRWVNFPQDYTVTWTNAKIANRPTDGGLSWSDDHKSLIYRYDATLGTQITTNDILTMLKATTTVPGLRNNITGNEKAQAEAGGRPNYRTTGYSQSNATTDGQRQFTLNGQVIQILDIINPSNGYGGQPVTNSNTRANHSNSTVVNVNEPAANGAGAFTIDHVVKSNSTHNASDAVYKAQLYLTPYGPKQYVEHLNQNTGNTTDAINIYFVPSDLVNPTISVGNYTNHQVFSGETFTNTITANDNFGVQSVTVPNTSQITGTVDNNHQHVSATAPNVTSATSKTINLLATDTSGNTATTSFNVTVKPLRDKYRVGTSSTAANPVRIANISNNATVSQADQTTIINSLTFTSNAPNRNYATASANEITSKTVSNVSRTGNNANVTVTVTHQDGTTSTVTVPVKHVIPEIVAHSHYTVQGQDFPAGNGSSAADYFKLSNGSAIPDATITWVSGQAPNKDNTRIGEDITVTAHILIDGETTPITKTATYKVVRTVPKHVFETARGVLYPGVSDMYDAKQYVKPVNNSWSTNAQHMNFQFVGTYGPNKDVVGISTRLIRVTYDNRQTEDLTILSKVKPDPPRIDANSVTYKAGLTNQEIKVNNVLNNSSVKLFKADNTPLNVTNITHGSGFSSVVTVSDALPNGGIKAKSSISMNNVTYTTQDEHGQVVTVTRNESVDSNDSASVTVTPQLQATTEGAVFIKGGDGFDFGHVERFIQNPPHGATVAWHDSPDTWKNTVGNTHKTAVVTLPSGQGTRNVEVPVKVYPVANAKAPSRDVKGQNLTHGTNAIDYITFDPNTNTNGITAAWANRQQPNNQQAGVQHLNVDVTYPGISAAKRVPVTVNVYQFEFPQTTYTTTVGGTLASGTQASGYAHMQNASGLPTDGFTYKWNRDTTGTNDANWAAMNKPNTAQVVNAKYDVIYNGHTFATSLPAKFVVKDVQPAKPTVTETAAGAITIAPGANQTVNTHAGNVTTYADKLVIKRNGNVVTTFTRRNNTSPWVKEASADNVTGIVGTNNGITVAAGTFNPADTIQVVATQGSGETISDEQRSDDFTVVAPQPNQATTKIWQNGHIDITPNNPSGHLINPTQAMDIAYTEKVGNGAEHSKTINVVRGQNNQWTIANKPDYVTLDAQTGKVTFNANTIKPNSSITITPKAGTGHSVSSNPSTLTAPAAHTVNTTEIVKDYGSNVTAAEINNAVQVANKRTATIKNGTAMPTNLAGGSTTTIPVTVTYNDGSTEEVQESIFTKADKRELITAKNHLDDPVSTEGKKPGTITQYNNAMHNAQQQINTAKTEAQQVINNERATPQQVSDALTKVRAAQTKIDQAKALLQNKEDNSQLVTSKNNLQSSVNQVPSTAGMTQQSIDNYNAKKREAETEITAAQRVIDNGDATAQQISDEKHRVDNALTALNQAKHDLTADTHALEQAVQQLNRTGTTTGKKPASITAYNNSIRALQSDLTSAKNSANAIIQKPIRTVQEVQSALTNVNRVNERLTQAINQLVPLADNSALRTAKTKLDEEINKSVTTDGMTQSSIQAYENAKRAGQTETTNAQNVINNGDATDQQIAAEKTKVEEKYNSLKQAIAGLTPDLAPLQTAKTQLQNDIDQPTSTTGMTSASVAAFNDKLSAARTKIQEIDRVLASHPDVATIRQNVTAANAAKTALDQARNGLTVDKAPLENAKNQLQHSIDTQTSTTGMTQDSINAYNAKLTAARNKVQQINQVLAGSPTVDQINTNTSAANQAKSDLDHARQALTPDKAPLQNAKTQLEQSINQPTDTTGMTTASLNAYNQKLQAARQKLTEINQVLNGNPTVQNINDKVAEANQAKDQLNTARQGLTLDRQPALTTLHGASNLNQAQQNNFTQQINAAQNHAALETIKSNITALNTAMTKLKDSVADNNTIKSGQNYTDATPANKQAYDNAVNAAKGVIGETTNPTMDVNTVNQKAASVKSTKDALDGQQNLQRAKTEATNAITHASDLNQAQKNALTQQVNSAQNVQAVNDIKQTTQSLNTAMTGLKRGVANHNQVVQSDNYVNADTNKKNDYNNAYNHANDIINGNAQHPVITPSDVNNALSNVTSKEHALNGEAKLNAAKQEANTALGHLNNLNNVQRQNLQSQINGAHQIDAVNTIKQNATNLNSAMGNLRQAVADKDQVKRTEDYADADTAKQNAYNSAVSSAETIINQTANPTMSVDDVNRATSAVTTNKNALNGDEKLVQSKTDAARAIDALPHLNNAQKADVKSKINAASNIAGVNTVKQQGTDLNTAMGNLQGAINDEQTTLNSQNYQDATPSKKTAYTNAVQAAKDILNKSNGQNKTKDQVTEAMNQVNSAKNNLDGTRLLDQAKQTAKQQLNNMTHLTTAQKTNLTNQINSGTTVAGVHTVQSNANTLDQAMNTLRQSIANNDATKASEDYVDANNDKQTAYNNAVAAAETIINANSNPEMNPSTITQKAEQVNSSKTALNGDENLATAKQNAKTYLNTLTSITDAQKNNLISQISSATRVSGVDTVKQNAQHLDQAMANLQNGINNESQVKSSEKYRDADTNKQQEYDNAITAAKAILNKSTGPNTAQNAVEAALQRVNTAKDALNGDAKLIAAQNAAKQHLGTLTHITTAQRNDLTNQIS.

The signal sequence occupies residues 1 to 39; that stretch reads MNYRDKIQKFSIRKYTVGTFSTVIATLVFLGFNTSQAHA. Residues 41–59 show a composition bias toward polar residues; that stretch reads ETNQPASVVKQKQQSNNEQ. 4 disordered regions span residues 41–152, 249–277, 1347–1372, and 2418–2438; these read ETNQ…GNDN, MPQR…PRSV, NEKA…NATT, and TITP…TLTA. The span at 65–78 shows a compositional bias: low complexity; it reads SQVQNSQNSQNSQS. Positions 79-117 are enriched in polar residues; the sequence is LSATHENEQPNNSQANLVNQKVAQSSTTNDEQPASQNVN. A compositionally biased stretch (basic and acidic residues) spans 130 to 140; it reads PDKEESKHKQN. Composition is skewed to polar residues over residues 141-151, 250-266, 1360-1372, and 2427-2438; these read ESQSANKNGND, PQRQ…QTRS, YRTT…NATT, and HSVSSNPSTLTA. 13 consecutive FIVAR domains span residues 2524–2580, 2610–2666, 2687–2750, 2780–2836, 2864–2919, 2947–3002, 3030–3085, 3154–3212, 3280–3339, 3407–3465, 3533–3591, 3659–3717, and 3785–3843; these read AKNH…VSDA, SKNN…ISDE, DTHA…VQSA, AKTK…IAAE, AKTQ…IRQN, AKNQ…INTN, AKTQ…INDK, AMTK…VNQK, AMTG…VNNA, AMGN…VNRA, AMGN…VTEA, AMNT…ITQK, and AMAN…VEAA.

The sequence is that of Extracellular matrix-binding protein EbhB (ebhB) from Staphylococcus aureus (strain N315).